A 364-amino-acid chain; its full sequence is GTPase Obg (364 aa).

The Obg domain maps to 1–159 (MKFIDEARIE…RNLRLELKVL (159 aa)). Positions 128–147 (IHFKSSTNRAPRQKTDGKAG) are disordered. Residues 160–334 (ADVGLLGMPN…LVHAIQEYLD (175 aa)) enclose the OBG-type G domain. GTP-binding positions include 166–173 (GMPNAGKS), 191–195 (FTTLH), 213–216 (DIPG), 284–287 (NKLD), and 315–317 (SAL). Mg(2+) is bound by residues serine 173 and threonine 193. The segment at 340 to 364 (EDAAAAAPDQRLDPTLHNVDHDDQA) is disordered. The segment covering 349-364 (QRLDPTLHNVDHDDQA) has biased composition (basic and acidic residues).

This sequence belongs to the TRAFAC class OBG-HflX-like GTPase superfamily. OBG GTPase family. In terms of assembly, monomer. The cofactor is Mg(2+).

The protein localises to the cytoplasm. Functionally, an essential GTPase which binds GTP, GDP and possibly (p)ppGpp with moderate affinity, with high nucleotide exchange rates and a fairly low GTP hydrolysis rate. Plays a role in control of the cell cycle, stress response, ribosome biogenesis and in those bacteria that undergo differentiation, in morphogenesis control. The chain is GTPase Obg from Ralstonia pickettii (strain 12J).